The following is a 478-amino-acid chain: Cytochrome c-552 (478 aa).

The signal sequence occupies residues 1-26 (MARKTLRARRFFSLIFPFFFITSVYA). Position 94 (His94) interacts with heme c. Positions 122, 125, and 126 each coordinate heme. Positions 160, 163, 164, 209, 212, and 213 each coordinate heme c. Positions 215, 216, 261, and 263 each coordinate Ca(2+). Tyr216 is a substrate binding site. His264 lines the substrate pocket. Residues His275, Cys282, Cys285, His286, His301, Cys314, Cys317, His318, and His393 each contribute to the heme c site.

The protein belongs to the cytochrome c-552 family. It depends on Ca(2+) as a cofactor. Requires heme c as cofactor.

Its subcellular location is the periplasm. The catalysed reaction is 6 Fe(III)-[cytochrome c] + NH4(+) + 2 H2O = 6 Fe(II)-[cytochrome c] + nitrite + 8 H(+). Its pathway is nitrogen metabolism; nitrate reduction (assimilation). Functionally, catalyzes the reduction of nitrite to ammonia, consuming six electrons in the process. This is Cytochrome c-552 from Salmonella paratyphi C (strain RKS4594).